The following is a 506-amino-acid chain: MTEHLPASQVSFDENALIAERRAKLLALRAQGVAYPNDVKREHYAADVQAAFANVETWTAETLEASSHRVRMAGRLMAKRLMGKASFAQIQDESGRIQLLIQSNVLGEDSYAAFKVLDVGDIIAVEGGLTRTRTGELSVKVNVLRLLTKALRPLPDKWHGLTDVEQRYRQRYVDLIVTPESREIFIKRSKIIRALRTWLDARLFLEVETPMMHYIPGGAAAKPFVTYHNALDLELYLRVAPELYLKRLVVGGLERVYEINRNFRNEGVSTRHNPEFTMLELYEAYSTYHEVMDLAETMIRDTAQSVLGTTQVIWDGAQIDLGPIFRRWRMDEAVCHHNPEMSVAECTDRDALLLHCERLKIKVKSSYGWGRLLLSIFEATVEHTLIQPTFITDHPVEISPLARESDIESGYTDRFELFINGKEIANGFSELNDPEEQAMRFQKQVEAKEGGDDEAMYYDADYIRALEYGMAPTGGLGIGVDRLVMLLTGSTSIRDVLLFPYMRPER.

Mg(2+) contacts are provided by E416 and E423.

This sequence belongs to the class-II aminoacyl-tRNA synthetase family. In terms of assembly, homodimer. It depends on Mg(2+) as a cofactor.

Its subcellular location is the cytoplasm. It catalyses the reaction tRNA(Lys) + L-lysine + ATP = L-lysyl-tRNA(Lys) + AMP + diphosphate. This is Lysine--tRNA ligase from Xylella fastidiosa (strain M23).